The sequence spans 317 residues: uncharacterized protein (317 aa).

Residues 1 to 13 are Cytoplasmic-facing; the sequence is MKRVTGVFLTLLR. A helical transmembrane segment spans residues 14-34; the sequence is FSQFASSVLVMSLLAYAIHAY. Residues 35-49 lie on the Extracellular side of the membrane; sequence GNRGNKKTNFTLATG. Residue Asn43 is glycosylated (N-linked (GlcNAc...) asparagine). Residues 50 to 70 traverse the membrane as a helical segment; the sequence is VISVFYLIALGILCLALPTLI. Tyr71 is a topological domain (cytoplasmic). The chain crosses the membrane as a helical span at residues 72–92; sequence IGMYFCAELIVCMLWLAAFVV. Residues 93-133 are Extracellular-facing; it reads LAKAQGERSCSNTNADGLYYNPYSGQYTADSHRRACNSSQA. An N-linked (GlcNAc...) asparagine glycan is attached at Asn129. A helical membrane pass occupies residues 134 to 154; it reads AIAFSGLCFVLFLISVILLGI. Topologically, residues 155–317 are cytoplasmic; it reads NVLTPIRKRY…EPNRNVNQMP (163 aa). Residues 204–317 are disordered; sequence RTGDVEAGAG…EPNRNVNQMP (114 aa). Low complexity predominate over residues 239-250; that stretch reads TTTTNTRYTTTT. Residues 256-282 show a composition bias toward polar residues; the sequence is RYTTNDRNPGSANVANSAVDQHAYSTD. Positions 284-295 are enriched in basic and acidic residues; that stretch reads SGDRSYQEKVTE. Residues 302–317 are compositionally biased toward polar residues; the sequence is MSGSTAEPNRNVNQMP.

It is found in the membrane. This is an uncharacterized protein from Saccharomyces cerevisiae (strain ATCC 204508 / S288c) (Baker's yeast).